The primary structure comprises 297 residues: NAD kinase (297 aa).

Catalysis depends on Asp74, which acts as the Proton acceptor. NAD(+) is bound by residues 74–75 (DG), Arg79, 148–149 (NE), Arg176, Asp178, 189–194 (TAYALS), and Gln248.

Belongs to the NAD kinase family. Requires a divalent metal cation as cofactor.

The protein resides in the cytoplasm. The catalysed reaction is NAD(+) + ATP = ADP + NADP(+) + H(+). Functionally, involved in the regulation of the intracellular balance of NAD and NADP, and is a key enzyme in the biosynthesis of NADP. Catalyzes specifically the phosphorylation on 2'-hydroxyl of the adenosine moiety of NAD to yield NADP. The sequence is that of NAD kinase from Blochmanniella pennsylvanica (strain BPEN).